The following is an 887-amino-acid chain: Alanine--tRNA ligase (887 aa).

His-581, His-585, Cys-683, and His-687 together coordinate Zn(2+).

It belongs to the class-II aminoacyl-tRNA synthetase family. It depends on Zn(2+) as a cofactor.

The protein resides in the cytoplasm. It carries out the reaction tRNA(Ala) + L-alanine + ATP = L-alanyl-tRNA(Ala) + AMP + diphosphate. Its function is as follows. Catalyzes the attachment of alanine to tRNA(Ala) in a two-step reaction: alanine is first activated by ATP to form Ala-AMP and then transferred to the acceptor end of tRNA(Ala). Also edits incorrectly charged Ser-tRNA(Ala) and Gly-tRNA(Ala) via its editing domain. The polypeptide is Alanine--tRNA ligase (Ehrlichia chaffeensis (strain ATCC CRL-10679 / Arkansas)).